Consider the following 476-residue polypeptide: MMHLAFLVLLCLPVCSAYPLSGAAKEEDSNKDLAQQYLEKYYNLEKDVKQFRRKDSNLIVKKIQGMQKFLGLEVTGKLDTDTLEVMRKPRCGVPDVGHFSSFPGMPKWRKTHLTYRIVNYTPDLPRDAVDSAIEKALKVWEEVTPLTFSRLYEGEADIMISFAVKEHGDFYSFDGPGHSLAHAYPPGPGLYGDIHFDDDEKWTEDASGTNLFLVAAHELGHSLGLFHSANTEALMYPLYNSFTELAQFRLSQDDVNGIQSLYGPPPASTEEPLVPTKSVPSGSEMPAKCDPALSFDAISTLRGEYLFFKDRYFWRRSHWNPEPEFHLISAFWPSLPSYLDAAYEVNSRDTVFIFKGNEFWAIRGNEVQAGYPRGIHTLGFPPTIRKIDAAVSDKEKKKTYFFAADKYWRFDENSQSMEQGFPRLIADDFPGVEPKVDAVLQAFGFFYFFSGSSQFEFDPNARMVTHILKSNSWLHC.

The first 17 residues, methionine 1 to alanine 17, serve as a signal peptide directing secretion. Positions tyrosine 18–histidine 98 are cleaved as a propeptide — activation peptide. Residues proline 89–valine 96 carry the Cysteine switch motif. Zn(2+)-binding residues include cysteine 91, histidine 167, aspartate 169, histidine 182, histidine 195, and histidine 217. Glutamate 218 is an active-site residue. 2 residues coordinate Zn(2+): histidine 221 and histidine 227. Hemopexin repeat units follow at residues proline 286–leucine 335, proline 336–proline 382, isoleucine 384–valine 432, and glutamate 433–cysteine 476. The cysteines at positions 289 and 476 are disulfide-linked.

This sequence belongs to the peptidase M10A family. Requires Zn(2+) as cofactor. The cofactor is Ca(2+).

The protein resides in the secreted. It is found in the extracellular space. It localises to the extracellular matrix. The enzyme catalyses Similar to stromelysin 1, but action on collagen types III, IV and V is weak.. Its function is as follows. Can degrade fibronectin, gelatins of type I, III, IV, and V; weakly collagens III, IV, and V. Activates procollagenase. In Homo sapiens (Human), this protein is Stromelysin-2 (MMP10).